Reading from the N-terminus, the 1243-residue chain is Serine/threonine-protein kinase WNK4 (1243 aa).

Positions Met1–Glu17 are enriched in polar residues. The tract at residues Met1–Val142 is disordered. The segment covering Val65 to Ala77 has biased composition (low complexity). Positions Ser78 to Lys103 are enriched in pro residues. The residue at position 97 (Ser97) is a Phosphoserine. Basic and acidic residues predominate over residues Ala118 to Leu127. Residues Lys157 and Lys175 each participate in a glycyl lysine isopeptide (Lys-Gly) (interchain with G-Cter in ubiquitin) cross-link. In terms of domain architecture, Protein kinase spans Leu174–Phe432. Ser184 lines the ATP pocket. Glycyl lysine isopeptide (Lys-Gly) (interchain with G-Cter in ubiquitin) cross-links involve residues Lys186, Lys226, and Lys241. ATP-binding positions include Thr254–Met257 and Lys304. The active-site Proton acceptor is the Asp321. Residue Lys328 forms a Glycyl lysine isopeptide (Lys-Gly) (interchain with G-Cter in ubiquitin) linkage. Residues Ser331 and Ser335 each carry the phosphoserine; by autocatalysis modification. Glycyl lysine isopeptide (Lys-Gly) (interchain with G-Cter in ubiquitin) cross-links involve residues Lys387, Lys393, Lys450, and Lys454. The segment at Lys526–Asp564 is disordered. Residues Pro534–Pro556 show a composition bias toward pro residues. The segment at Glu557 to Gln567 is interaction with KLHL3. Ser575 carries the post-translational modification Phosphoserine. Over residues Ser630–Ser641 the composition is skewed to low complexity. 3 disordered regions span residues Ser630–Asp683, Asp751–Glu871, and Ser943–Trp1110. Residues Pro663–Leu676 are compositionally biased toward basic residues. Residues Glu767–Asp780 are compositionally biased toward pro residues. A compositionally biased stretch (low complexity) spans Trp797–Ser812. Over residues Pro822–Phe843 the composition is skewed to pro residues. 3 stretches are compositionally biased toward low complexity: residues Ser844 to Pro854, Pro862 to Glu871, and Ser943 to Ser952. Residues Pro953–Ala970 show a composition bias toward pro residues. Residue Lys1010 forms a Glycyl lysine isopeptide (Lys-Gly) (interchain with G-Cter in ubiquitin) linkage. The RFXV motif motif lies at Arg1016–Val1019. Ser1035 is modified (phosphoserine). Residues Glu1065–Ala1077 are compositionally biased toward basic and acidic residues. Residues Lys1144, Lys1157, and Lys1158 each participate in a glycyl lysine isopeptide (Lys-Gly) (interchain with G-Cter in ubiquitin) cross-link. The disordered stretch occupies residues Arg1166–Met1243. Composition is skewed to polar residues over residues Ser1193–Arg1204 and Asn1216–Gln1228. Ser1217 is modified (phosphoserine).

This sequence belongs to the protein kinase superfamily. Ser/Thr protein kinase family. WNK subfamily. In terms of assembly, interacts with the C-terminal region of KCNJ1. Requires Mg(2+) as cofactor. Post-translationally, autophosphorylated at Ser-331 and Ser-335, promoting its activation. Phosphorylated by WNK1 and WNK3. Phosphorylated at Ser-575 in a MAP3K15/ASK3-dependent process in response to osmotic stress or hypotonic low-chloride stimulation. Ubiquitinated by the BCR(KLHL3) complex, leading to its degradation. Also ubiquitinated by the BCR(KLHL2) complex. Expressed in kidney, colon and skin.

The protein localises to the cell junction. It localises to the tight junction. The catalysed reaction is L-seryl-[protein] + ATP = O-phospho-L-seryl-[protein] + ADP + H(+). The enzyme catalyses L-threonyl-[protein] + ATP = O-phospho-L-threonyl-[protein] + ADP + H(+). With respect to regulation, activation requires autophosphorylation of Ser-331 and Ser-335. Autophosphorylation and subsequent activation is inhibited by increases in intracellular ionic strength: Cl(-) potently inhibits WNK4 kinase activity via direct binding. Also inhibited by K(+) ions. Serine/threonine-protein kinase component of the WNK4-SPAK/OSR1 kinase cascade, which acts as a key regulator of ion transport in the distal nephron and blood pressure. The WNK4-SPAK/OSR1 kinase cascade is composed of WNK4, which mediates phosphorylation and activation of downstream kinases OXSR1/OSR1 and STK39/SPAK. Following activation, OXSR1/OSR1 and STK39/SPAK catalyze phosphorylation of ion cotransporters, such as SLC12A1/NKCC2, SLC12A2/NKCC1, SLC12A3/NCC, SLC12A5/KCC2 or SLC12A6/KCC3, regulating their activity. Acts as a molecular switch that regulates the balance between renal salt reabsorption and K(+) secretion by modulating the activities of renal transporters and channels, including the Na-Cl cotransporter SLC12A3/NCC and the K(+) channel, KCNJ1/ROMK. Regulates NaCl reabsorption in the distal nephron by activating the thiazide-sensitive Na-Cl cotransporter SLC12A3/NCC in distal convoluted tubule cells of kidney: activates SLC12A3/NCC in a OXSR1/OSR1- and STK39/SPAK-dependent process. Also acts as a scaffold protein independently of its protein kinase activity: negatively regulates cell membrane localization of various transporters and channels (CFTR, KCNJ1/ROMK, SLC4A4, SLC26A9 and TRPV4) by clathrin-dependent endocytosis. Also inhibits the activity of the epithelial Na(+) channel (ENaC) SCNN1A, SCNN1B, SCNN1D in a inase-independent mechanism. May also phosphorylate NEDD4L. The sequence is that of Serine/threonine-protein kinase WNK4 from Homo sapiens (Human).